A 166-amino-acid polypeptide reads, in one-letter code: Ubiquitin-fold modifier-conjugating enzyme 1 (166 aa).

Cys116 acts as the Glycyl thioester intermediate in catalysis.

The protein belongs to the ubiquitin-conjugating enzyme family. UFC1 subfamily. In terms of assembly, interacts with UBA5 (via C-terminus). Interacts with UFL1. Interacts with UFM1.

E2-like enzyme which specifically catalyzes the second step in ufmylation. Accepts the ubiquitin-like modifier UFM1 from the E1 enzyme UBA5 and forms an intermediate with UFM1 via a thioester linkage. Ufmylation is involved in various processes, such as ribosome recycling, response to DNA damage, interferon response or reticulophagy (also called ER-phagy). This Danio rerio (Zebrafish) protein is Ubiquitin-fold modifier-conjugating enzyme 1 (ufc1).